A 439-amino-acid chain; its full sequence is Protein translocase subunit SecY (439 aa).

Transmembrane regions (helical) follow at residues Ile28–Gly48, Ile73–Ile93, Leu127–Val147, Pro156–Ile176, Leu179–Ala199, Val220–Val240, Gly276–Phe296, Ile318–Ile338, Leu375–Gly395, and Thr401–Ala421.

It belongs to the SecY/SEC61-alpha family. As to quaternary structure, component of the Sec protein translocase complex. Heterotrimer consisting of SecY, SecE and SecG subunits. The heterotrimers can form oligomers, although 1 heterotrimer is thought to be able to translocate proteins. Interacts with the ribosome. Interacts with SecDF, and other proteins may be involved. Interacts with SecA.

The protein resides in the cell inner membrane. Its subcellular location is the cellular thylakoid membrane. In terms of biological role, the central subunit of the protein translocation channel SecYEG. Consists of two halves formed by TMs 1-5 and 6-10. These two domains form a lateral gate at the front which open onto the bilayer between TMs 2 and 7, and are clamped together by SecE at the back. The channel is closed by both a pore ring composed of hydrophobic SecY resides and a short helix (helix 2A) on the extracellular side of the membrane which forms a plug. The plug probably moves laterally to allow the channel to open. The ring and the pore may move independently. The sequence is that of Protein translocase subunit SecY from Synechococcus elongatus (strain ATCC 33912 / PCC 7942 / FACHB-805) (Anacystis nidulans R2).